A 61-amino-acid polypeptide reads, in one-letter code: Large ribosomal subunit protein uL29 (61 aa).

Belongs to the universal ribosomal protein uL29 family.

The polypeptide is Large ribosomal subunit protein uL29 (Campylobacter curvus (strain 525.92)).